We begin with the raw amino-acid sequence, 39 residues long: Photosystem II reaction center protein J (39 aa).

A helical transmembrane segment spans residues 7 to 27 (IPLWIVAVVAGMGVIAVVGIF).

Belongs to the PsbJ family. PSII is composed of 1 copy each of membrane proteins PsbA, PsbB, PsbC, PsbD, PsbE, PsbF, PsbH, PsbI, PsbJ, PsbK, PsbL, PsbM, PsbT, PsbX, PsbY, PsbZ, Psb30/Ycf12, peripheral proteins PsbO, CyanoQ (PsbQ), PsbU, PsbV and a large number of cofactors. It forms dimeric complexes.

Its subcellular location is the cellular thylakoid membrane. Functionally, this protein is a component of the reaction center of photosystem II. One of the components of the core complex of photosystem II (PSII). PSII is a light-driven water:plastoquinone oxidoreductase that uses light energy to abstract electrons from H(2)O, generating O(2) and a proton gradient subsequently used for ATP formation. It consists of a core antenna complex that captures photons, and an electron transfer chain that converts photonic excitation into a charge separation. This is Photosystem II reaction center protein J from Picosynechococcus sp. (strain ATCC 27264 / PCC 7002 / PR-6) (Agmenellum quadruplicatum).